Reading from the N-terminus, the 593-residue chain is Mitoguardin 2 (593 aa).

A run of 2 helical transmembrane segments spans residues 11–31 and 42–62; these read MIQALAMTVAEIPVFLYTTFG and PGLRKVLFATALGTVALALAA. Disordered regions lie at residues 101-134 and 195-228; these read KKGYSNRRVQSPSSKSNDTLSGISSIEPSKHSGS and LSVGQRGDSGSTPTPGDGLRNPETASEALSEPES. A compositionally biased stretch (polar residues) spans 107–123; that stretch reads RRVQSPSSKSNDTLSGI. The span at 124–134 shows a compositional bias: low complexity; the sequence is SSIEPSKHSGS. The residue at position 132 (Ser132) is a Phosphoserine. Thr206 carries the phosphothreonine modification. Phosphoserine is present on residues Ser220, Ser224, and Ser228. Thr273 is modified (phosphothreonine). A phosphoserine mark is found at Ser276 and Ser295. The FFAT motif lies at 292–298; it reads SFFSATE. A helical membrane pass occupies residues 563-583; sequence ILLGYLGVPAASSIGLNGVLP.

This sequence belongs to the mitoguardin family. As to quaternary structure, homodimer and heterodimer; forms heterodimers with MIGA1. Interacts with PLD6/MitoPLD. Interacts (via phosphorylated FFAT motif) with MOSPD2. Post-translationally, phosphorylation at Ser-295 of the FFAT motif activates interaction with MOSPD2.

The protein resides in the mitochondrion outer membrane. Functionally, regulator of mitochondrial fusion: acts by forming homo- and heterodimers at the mitochondrial outer membrane and facilitating the formation of PLD6/MitoPLD dimers. May act by regulating phospholipid metabolism via PLD6/MitoPLD. This chain is Mitoguardin 2, found in Bos taurus (Bovine).